The sequence spans 69 residues: Cell division protein ZapB (69 aa).

Residues 3–60 (LELFNQLEQKVQNAVETIEMLKMEAEELREENTRLKQERDEWERRLNGLLGKFQEIED) are a coiled coil.

The protein belongs to the ZapB family. Homodimer. The ends of the coiled-coil dimer bind to each other, forming polymers. Interacts with FtsZ.

The protein localises to the cytoplasm. In terms of biological role, non-essential, abundant cell division factor that is required for proper Z-ring formation. It is recruited early to the divisome by direct interaction with FtsZ, stimulating Z-ring assembly and thereby promoting cell division earlier in the cell cycle. Its recruitment to the Z-ring requires functional FtsA or ZipA. The sequence is that of Cell division protein ZapB from Chromohalobacter salexigens (strain ATCC BAA-138 / DSM 3043 / CIP 106854 / NCIMB 13768 / 1H11).